We begin with the raw amino-acid sequence, 241 residues long: Purine nucleoside phosphorylase DeoD-type (241 aa).

Residue His5 coordinates a purine D-ribonucleoside. Residues Gly21, Arg25, Arg44, and 88 to 91 (RVGS) contribute to the phosphate site. Residues 180–182 (EME) and 204–205 (SD) contribute to the a purine D-ribonucleoside site. Asp205 (proton donor) is an active-site residue.

It belongs to the PNP/UDP phosphorylase family. As to quaternary structure, homohexamer; trimer of homodimers.

The enzyme catalyses a purine D-ribonucleoside + phosphate = a purine nucleobase + alpha-D-ribose 1-phosphate. It carries out the reaction a purine 2'-deoxy-D-ribonucleoside + phosphate = a purine nucleobase + 2-deoxy-alpha-D-ribose 1-phosphate. Its function is as follows. Catalyzes the reversible phosphorolytic breakdown of the N-glycosidic bond in the beta-(deoxy)ribonucleoside molecules, with the formation of the corresponding free purine bases and pentose-1-phosphate. This is Purine nucleoside phosphorylase DeoD-type from Yersinia enterocolitica serotype O:8 / biotype 1B (strain NCTC 13174 / 8081).